The sequence spans 241 residues: MSQWSLSQLLSSLHEDIQQRLSVVRKTFGHPGTKGDASENVWIDMLDTYLPKRYQAAKAHVVDSLGNFSQQIDVVVFDRQYSPFIFTYENETIIPAESVYAVFEAKQTADAGLVAYAQEKVASVRRLHRTSLPIPHAGGTYPAKPLIPILGGLLTFESEWSPALGPSMDKALNANLTEGRLDIGCVAAHGHFFYDQASGAYSYTNENKPATAFLFKLIAQLQFSGTVPMIDVEAYGQWLTK.

Residues aspartate 73, glutamate 104, and lysine 106 contribute to the active site. Aspartate 73 and glutamate 104 together coordinate Mg(2+).

It belongs to the NucC endonuclease family. In terms of assembly, self-oligomerizes. Forms homotrimers; in the presence of cAAA the trimers associate face-to-face to form homohexamers. The 2 cAAA-binding sites are on the exterior of the hexamer at the three-way junction, there are maximally 2 cyclic nucleotides per hexamer. It depends on Mg(2+) as a cofactor.

With respect to regulation, activated by cAAA and to a lesser extent cAA; both cyclic nucleotides are products of its cognate CD-NTase. Cyclic nucleotide binding causes hexamerization. Effector DNase of a CBASS antivirus system. CBASS (cyclic oligonucleotide-based antiphage signaling system) provides immunity against bacteriophage. The CD-NTase protein synthesizes cyclic nucleotides in response to infection; these serve as specific second messenger signals. The signals activate a diverse range of effectors, leading to bacterial cell death and thus abortive phage infection. A type III-C(AAA) CBASS system. Its function is as follows. A cyclic nucleotide-activated dsDNase. In the presence of 3',3',3'-cyclic AMP-AMP-AMP (cAAA) and to a lesser extent cyclic-di-AMP (c-di-AMP), endonucleolytically degrades dsDNA. Binds one cAAA in a pocket on one surface of the trimer; cAAA binding promotes hexamerization which is probably necessary for nuclease activation. The nuclease digests dsDNA to about 50 bp lengths. DNA has been modeled to contact a pair of juxtaposed active sites (one from each layer of the hexamer), accounting for cleavage on both strands. In Pseudomonas aeruginosa, this protein is Endodeoxyribonuclease NucC.